The chain runs to 363 residues: Anthranilate phosphoribosyltransferase (363 aa).

Residues Gly-85, 88–89 (GD), Thr-93, 95–98 (NVST), 113–121 (KHGNRALSS), and Ala-125 contribute to the 5-phospho-alpha-D-ribose 1-diphosphate site. Gly-85 is an anthranilate binding site. Mg(2+) is bound at residue Ser-97. Residue Asn-116 participates in anthranilate binding. Arg-171 is an anthranilate binding site. Residues Asp-233 and Glu-234 each contribute to the Mg(2+) site.

This sequence belongs to the anthranilate phosphoribosyltransferase family. In terms of assembly, homodimer. Mg(2+) is required as a cofactor.

It carries out the reaction N-(5-phospho-beta-D-ribosyl)anthranilate + diphosphate = 5-phospho-alpha-D-ribose 1-diphosphate + anthranilate. It participates in amino-acid biosynthesis; L-tryptophan biosynthesis; L-tryptophan from chorismate: step 2/5. Its function is as follows. Catalyzes the transfer of the phosphoribosyl group of 5-phosphorylribose-1-pyrophosphate (PRPP) to anthranilate to yield N-(5'-phosphoribosyl)-anthranilate (PRA). This is Anthranilate phosphoribosyltransferase from Gluconobacter oxydans (strain 621H) (Gluconobacter suboxydans).